A 924-amino-acid polypeptide reads, in one-letter code: Protein translocase subunit SecA (924 aa).

Residues glutamine 87, 105–109 (GEGKT), and aspartate 515 contribute to the ATP site. Cysteine 908, cysteine 910, cysteine 919, and histidine 920 together coordinate Zn(2+).

This sequence belongs to the SecA family. Monomer and homodimer. Part of the essential Sec protein translocation apparatus which comprises SecA, SecYEG and auxiliary proteins SecDF-YajC and YidC. Requires Zn(2+) as cofactor.

It localises to the cell inner membrane. It is found in the cytoplasm. The enzyme catalyses ATP + H2O + cellular proteinSide 1 = ADP + phosphate + cellular proteinSide 2.. Functionally, part of the Sec protein translocase complex. Interacts with the SecYEG preprotein conducting channel. Has a central role in coupling the hydrolysis of ATP to the transfer of proteins into and across the cell membrane, serving both as a receptor for the preprotein-SecB complex and as an ATP-driven molecular motor driving the stepwise translocation of polypeptide chains across the membrane. This Cupriavidus pinatubonensis (strain JMP 134 / LMG 1197) (Cupriavidus necator (strain JMP 134)) protein is Protein translocase subunit SecA.